The chain runs to 392 residues: Small ribosomal subunit protein uS9m (392 aa).

The segment covering 8–25 has biased composition (low complexity); sequence RSSRAMSSASPASASDSD. A disordered region spans residues 8–27; that stretch reads RSSRAMSSASPASASDSDTS.

It belongs to the universal ribosomal protein uS9 family. As to quaternary structure, component of the mitochondrial ribosome small subunit (28S) which comprises a 12S rRNA and about 30 distinct proteins.

It is found in the mitochondrion. The sequence is that of Small ribosomal subunit protein uS9m (mrps-9) from Caenorhabditis elegans.